We begin with the raw amino-acid sequence, 212 residues long: Adenylate kinase (212 aa).

Gly10–Thr15 lines the ATP pocket. The interval Ala30–Ile59 is NMP. AMP is bound by residues Arg36, Glu57 to Ile59, Gly85 to Arg88, and Gln92. The segment at Gly122–Asp160 is LID. Position 123 (Arg123) interacts with ATP. Residues Cys126 and Cys129 each contribute to the Zn(2+) site. Ile132–Tyr133 is a binding site for ATP. Zn(2+)-binding residues include Cys146 and Cys149. AMP-binding residues include Arg157 and Arg168. Lys196 contributes to the ATP binding site.

This sequence belongs to the adenylate kinase family. Monomer.

It localises to the cytoplasm. It catalyses the reaction AMP + ATP = 2 ADP. It functions in the pathway purine metabolism; AMP biosynthesis via salvage pathway; AMP from ADP: step 1/1. Functionally, catalyzes the reversible transfer of the terminal phosphate group between ATP and AMP. Plays an important role in cellular energy homeostasis and in adenine nucleotide metabolism. This chain is Adenylate kinase, found in Rickettsia conorii (strain ATCC VR-613 / Malish 7).